A 365-amino-acid polypeptide reads, in one-letter code: Ubiquitin carboxyl-terminal hydrolase 4 (365 aa).

A lipid anchor (N-myristoyl glycine) is attached at Gly2. Residues 23 to 362 form the USP domain; sequence FGFENFGNTC…HGYILLYESL (340 aa). Residue Cys32 is the Nucleophile of the active site. A Bipartite nuclear localization signal motif is present at residues 81–98; the sequence is KKKTGVIAPKRFVQRLKK. His310 acts as the Proton acceptor in catalysis.

This sequence belongs to the peptidase C19 family. As to expression, constitutively and ubiquitously expressed.

It is found in the nucleus. The enzyme catalyses Thiol-dependent hydrolysis of ester, thioester, amide, peptide and isopeptide bonds formed by the C-terminal Gly of ubiquitin (a 76-residue protein attached to proteins as an intracellular targeting signal).. Its function is as follows. Recognizes and hydrolyzes the peptide bond at the C-terminal Gly of ubiquitin. Involved in the processing of poly-ubiquitin precursors as well as that of ubiquitinated proteins. Required for the correct development of pollen. This chain is Ubiquitin carboxyl-terminal hydrolase 4 (UBP4), found in Arabidopsis thaliana (Mouse-ear cress).